Consider the following 363-residue polypeptide: 24-methylenesterol C-methyltransferase 2 (363 aa).

The chain crosses the membrane as a helical span at residues 6-26; it reads MAWTAAGVGMALVYWFVWVMG.

This sequence belongs to the class I-like SAM-binding methyltransferase superfamily. Erg6/SMT family.

It is found in the membrane. It carries out the reaction 24-methylidenelophenol + S-adenosyl-L-methionine = (Z)-24-ethylidenelophenol + S-adenosyl-L-homocysteine + H(+). It functions in the pathway steroid biosynthesis; sterol biosynthesis. Catalyzes the methyl transfer from S-adenosyl-methionine to the methylene group of 24-methylene lophenol to form 24-ethylidene lophenol. The sequence is that of 24-methylenesterol C-methyltransferase 2 (Smt2-1) from Oryza sativa subsp. japonica (Rice).